A 441-amino-acid polypeptide reads, in one-letter code: Ribosomal protein uS12 methylthiotransferase RimO (441 aa).

An MTTase N-terminal domain is found at 8–118; that stretch reads PKIGFVSLGC…VLEHVHHYTP (111 aa). Residues cysteine 17, cysteine 53, cysteine 82, cysteine 150, cysteine 154, and cysteine 157 each coordinate [4Fe-4S] cluster. Residues 136–373 enclose the Radical SAM core domain; sequence LTPRHYAYLK…MQLQQQISAE (238 aa). Residues 376–441 form the TRAM domain; sequence QEKVGREILV…DEYDLWGTRV (66 aa).

It belongs to the methylthiotransferase family. RimO subfamily. [4Fe-4S] cluster serves as cofactor.

It is found in the cytoplasm. It catalyses the reaction L-aspartate(89)-[ribosomal protein uS12]-hydrogen + (sulfur carrier)-SH + AH2 + 2 S-adenosyl-L-methionine = 3-methylsulfanyl-L-aspartate(89)-[ribosomal protein uS12]-hydrogen + (sulfur carrier)-H + 5'-deoxyadenosine + L-methionine + A + S-adenosyl-L-homocysteine + 2 H(+). Functionally, catalyzes the methylthiolation of an aspartic acid residue of ribosomal protein uS12. The sequence is that of Ribosomal protein uS12 methylthiotransferase RimO from Klebsiella pneumoniae subsp. pneumoniae (strain ATCC 700721 / MGH 78578).